Consider the following 125-residue polypeptide: Small ribosomal subunit protein uS13 (125 aa).

It belongs to the universal ribosomal protein uS13 family. As to quaternary structure, part of the 30S ribosomal subunit. Forms a loose heterodimer with protein S19. Forms two bridges to the 50S subunit in the 70S ribosome.

Functionally, located at the top of the head of the 30S subunit, it contacts several helices of the 16S rRNA. In the 70S ribosome it contacts the 23S rRNA (bridge B1a) and protein L5 of the 50S subunit (bridge B1b), connecting the 2 subunits; these bridges are implicated in subunit movement. Contacts the tRNAs in the A and P-sites. The chain is Small ribosomal subunit protein uS13 from Rickettsia massiliae (strain Mtu5).